The sequence spans 1577 residues: Probable serine/threonine-protein kinase gdt9 (1577 aa).

The signal sequence occupies residues 1 to 16; the sequence is MKTFLLIFLLICVCKG. Residues 17–966 are Extracellular-facing; sequence ITNITTPSIY…NNEDNHKKLV (950 aa). The helical transmembrane segment at 967–987 threads the bilayer; it reads IALSVSIPVAALLVILCFGIF. Topologically, residues 988 to 1577 are cytoplasmic; it reads ICYNNNKKNK…SLVKIFKRFN (590 aa). Residues 998–1014 are compositionally biased toward basic and acidic residues; the sequence is NETKGKDIETNTDKKDD. 2 disordered regions span residues 998 to 1019 and 1050 to 1128; these read NETK…NENE and TLPP…FPTI. The span at 1050-1082 shows a compositional bias: polar residues; that stretch reads TLPPQSTISIDTSPSSENTTFTESLTPKKSATV. Residues 1091 to 1115 show a composition bias toward low complexity; sequence NSTNESTVSNSSSENNSDNNNNNNN. The Protein kinase domain maps to 1290 to 1573; that stretch reads LDFDEICGQG…EIVFSLVKIF (284 aa). ATP-binding positions include 1296 to 1304 and lysine 1317; that span reads CGQGTYGMV. Aspartate 1436 acts as the Proton acceptor in catalysis.

It in the N-terminal section; belongs to the GDT family. In the C-terminal section; belongs to the protein kinase superfamily. TKL Ser/Thr protein kinase family.

Its subcellular location is the membrane. The catalysed reaction is L-seryl-[protein] + ATP = O-phospho-L-seryl-[protein] + ADP + H(+). It carries out the reaction L-threonyl-[protein] + ATP = O-phospho-L-threonyl-[protein] + ADP + H(+). The polypeptide is Probable serine/threonine-protein kinase gdt9 (gdt9) (Dictyostelium discoideum (Social amoeba)).